We begin with the raw amino-acid sequence, 160 residues long: MIKAVYPGSFDPVTNGHIDIIQRGAKIYDEVIVLVAENISKTPLFSLEERLDMLRHSLKDIPNVKIDHFSGLLVDYLKKIDVKIIIRGLRAVSDFEYEFQQALTNKKLYPECETVFLVSDLKYTFLSSSMVKEIAKFGGCIKGLVPDYVAEKLYEKFKVK.

A substrate-binding site is contributed by S9. ATP contacts are provided by residues 9-10 and H17; that span reads SF. The substrate site is built by K41, L73, and R87. ATP is bound by residues 88–90, E98, and 123–129; these read GLR and YTFLSSS.

It belongs to the bacterial CoaD family. In terms of assembly, homohexamer. Mg(2+) serves as cofactor.

The protein resides in the cytoplasm. It carries out the reaction (R)-4'-phosphopantetheine + ATP + H(+) = 3'-dephospho-CoA + diphosphate. Its pathway is cofactor biosynthesis; coenzyme A biosynthesis; CoA from (R)-pantothenate: step 4/5. In terms of biological role, reversibly transfers an adenylyl group from ATP to 4'-phosphopantetheine, yielding dephospho-CoA (dPCoA) and pyrophosphate. This is Phosphopantetheine adenylyltransferase from Dictyoglomus turgidum (strain DSM 6724 / Z-1310).